A 180-amino-acid chain; its full sequence is MASSVLSSAAVATRSNVAQANMVAPFTGLKSAASFPVSRKQNLDITSIASNGGRVQCMQVWPPINKKKYETLSYLPDLSQEQLLSEIEYLLKSGWVPCLEFETERGFVYREHHHSPGYYDGRYWTMWKLPMFGCTDATQVLAEVEEAKKAYPQAWVRIIGFDNVRQVQCISFIAYKPEGY.

Residues 1–56 (MASSVLSSAAVATRSNVAQANMVAPFTGLKSAASFPVSRKQNLDITSIASNGGRVQ) constitute a chloroplast transit peptide.

Belongs to the RuBisCO small chain family. In terms of assembly, heterohexadecamer of 8 large and 8 small subunits.

The protein resides in the plastid. Its subcellular location is the chloroplast. Functionally, ruBisCO catalyzes two reactions: the carboxylation of D-ribulose 1,5-bisphosphate, the primary event in carbon dioxide fixation, as well as the oxidative fragmentation of the pentose substrate. Both reactions occur simultaneously and in competition at the same active site. Although the small subunit is not catalytic it is essential for maximal activity. The sequence is that of Ribulose bisphosphate carboxylase small subunit, chloroplastic from Nicotiana plumbaginifolia (Leadwort-leaved tobacco).